The primary structure comprises 1155 residues: Eukaryotic translation initiation factor 3 subunit A (1155 aa).

Positions 319-502 constitute a PCI domain; the sequence is LQRMAAHVLL…NSIYFGTDLT (184 aa). 2 disordered regions span residues 589–613 and 836–1155; these read QNNAREEEEARRQEEESRKAKLAEQ and AAEA…VKRR. Basic and acidic residues-rich tracts occupy residues 836–900, 925–987, 1004–1057, and 1066–1101; these read AAEA…RGGD, DRNE…EPDS, SRDD…DAAP, and DAPRQSDRDNRRPAGDRRDREVRGGDLRGPESRAPK. Residues 1104 to 1118 are compositionally biased toward gly residues; sequence GPSGGTGTAASGGGN. The segment covering 1125–1145 has biased composition (basic and acidic residues); the sequence is PRDEPAPKRDQPQDKENKAVD.

It belongs to the eIF-3 subunit A family. Component of the eukaryotic translation initiation factor 3 (eIF-3) complex. The eIF-3 complex interacts with pix.

It localises to the cytoplasm. Its function is as follows. RNA-binding component of the eukaryotic translation initiation factor 3 (eIF-3) complex, which is involved in protein synthesis of a specialized repertoire of mRNAs and, together with other initiation factors, stimulates binding of mRNA and methionyl-tRNAi to the 40S ribosome. The eIF-3 complex specifically targets and initiates translation of a subset of mRNAs involved in cell proliferation. This chain is Eukaryotic translation initiation factor 3 subunit A, found in Drosophila pseudoobscura pseudoobscura (Fruit fly).